The chain runs to 100 residues: MDLTPREKDKLLIFTAGLVAERRLARGLKLNYPETMAYISAALLEGARDGQTVAELMHYGTTLLSREQVMEGIPEMIPDIQVEATFPDGTKLVTVHQPIA.

It belongs to the urease gamma subunit family. In terms of assembly, heterotrimer of UreA (gamma), UreB (beta) and UreC (alpha) subunits. Three heterotrimers associate to form the active enzyme.

Its subcellular location is the cytoplasm. It carries out the reaction urea + 2 H2O + H(+) = hydrogencarbonate + 2 NH4(+). The protein operates within nitrogen metabolism; urea degradation; CO(2) and NH(3) from urea (urease route): step 1/1. The protein is Urease subunit gamma of Pseudomonas fluorescens (strain ATCC BAA-477 / NRRL B-23932 / Pf-5).